The primary structure comprises 367 residues: Putative heat shock 70 kDa protein 7 (367 aa).

Belongs to the heat shock protein 70 family.

The sequence is that of Putative heat shock 70 kDa protein 7 (HSPA7) from Homo sapiens (Human).